We begin with the raw amino-acid sequence, 819 residues long: Probable beta-glucosidase G (819 aa).

Positions 1–20 are cleaved as a signal peptide; the sequence is MTSASQILVWGLLAASGAQA. 5 N-linked (GlcNAc...) asparagine glycosylation sites follow: N41, N59, N107, N228, and N277. D305 is a catalytic residue. N-linked (GlcNAc...) asparagine glycans are attached at residues N337, N344, N351, N403, N500, N509, N554, N567, N588, N627, N683, and N719.

This sequence belongs to the glycosyl hydrolase 3 family.

The protein resides in the secreted. It carries out the reaction Hydrolysis of terminal, non-reducing beta-D-glucosyl residues with release of beta-D-glucose.. The protein operates within glycan metabolism; cellulose degradation. Functionally, beta-glucosidases are one of a number of cellulolytic enzymes involved in the degradation of cellulosic biomass. Catalyzes the last step releasing glucose from the inhibitory cellobiose. The polypeptide is Probable beta-glucosidase G (bglG) (Emericella nidulans (strain FGSC A4 / ATCC 38163 / CBS 112.46 / NRRL 194 / M139) (Aspergillus nidulans)).